Reading from the N-terminus, the 280-residue chain is UPF0273 protein SSO1861 (280 aa).

In terms of domain architecture, KaiC spans 2-246; that stretch reads KRVKTYIPGL…YLKISNWSVS (245 aa). 29 to 36 provides a ligand contact to ATP; it reads GGPGTGKS.

The protein belongs to the UPF0273 family.

This is UPF0273 protein SSO1861 from Saccharolobus solfataricus (strain ATCC 35092 / DSM 1617 / JCM 11322 / P2) (Sulfolobus solfataricus).